The sequence spans 1450 residues: DNA-directed RNA polymerase III subunit rpc1 (1450 aa).

Cysteine 67, cysteine 70, cysteine 77, histidine 80, cysteine 107, cysteine 110, and cysteine 154 together coordinate Zn(2+). Residues aspartate 491, aspartate 493, and aspartate 495 each coordinate Mg(2+). The segment at 832–844 (PTEFFFHTMGGRE) is bridging helix.

Belongs to the RNA polymerase beta' chain family. Component of the RNA polymerase III (Pol III) complex consisting of 17 subunits.

It is found in the nucleus. It carries out the reaction RNA(n) + a ribonucleoside 5'-triphosphate = RNA(n+1) + diphosphate. Functionally, DNA-dependent RNA polymerase catalyzes the transcription of DNA into RNA using the four ribonucleoside triphosphates as substrates. Largest and catalytic core component of RNA polymerase III which synthesizes small RNAs, such as 5S rRNA and tRNAs. Forms the polymerase active center together with the second largest subunit. A single-stranded DNA template strand of the promoter is positioned within the central active site cleft of Pol III. A bridging helix emanates from RPC1 and crosses the cleft near the catalytic site and is thought to promote translocation of Pol III by acting as a ratchet that moves the RNA-DNA hybrid through the active site by switching from straight to bent conformations at each step of nucleotide addition. This is DNA-directed RNA polymerase III subunit rpc1 (polr3a) from Dictyostelium discoideum (Social amoeba).